Reading from the N-terminus, the 102-residue chain is Nuclear protein 2 (102 aa).

Disordered regions lie at residues 1-26 (MDPP…ALPT) and 46-102 (PASG…TRLA). Over residues 85-102 (QRKRRQRQLQPRPRTRLA) the composition is skewed to basic residues.

The protein belongs to the NUPR family.

It is found in the nucleus. Acts as a transcriptional repressor by inhibiting gene expression at the NUPR1 promoter in a p53/TP53-dependent manner in cancer cells. Involved in the G1 cell cycle arrest, and in a decrease in cell viability and cell proliferation of pancreatic cancer cells. Plays a role as a negative regulator of the protumoral factor NUPR1. This chain is Nuclear protein 2, found in Mus musculus (Mouse).